We begin with the raw amino-acid sequence, 132 residues long: Large ribosomal subunit protein uL14 (132 aa).

Belongs to the universal ribosomal protein uL14 family. In terms of assembly, part of the 50S ribosomal subunit. Forms a cluster with proteins L3 and L24e, part of which may contact the 16S rRNA in 2 intersubunit bridges.

Its function is as follows. Binds to 23S rRNA. Forms part of two intersubunit bridges in the 70S ribosome. This Methanococcus maripaludis (strain DSM 14266 / JCM 13030 / NBRC 101832 / S2 / LL) protein is Large ribosomal subunit protein uL14.